Consider the following 213-residue polypeptide: Pyrrolidone-carboxylate peptidase (213 aa).

Residues Glu-78, Cys-141, and His-165 contribute to the active site.

Belongs to the peptidase C15 family. As to quaternary structure, homotetramer.

The protein localises to the cytoplasm. It carries out the reaction Release of an N-terminal pyroglutamyl group from a polypeptide, the second amino acid generally not being Pro.. Its function is as follows. Removes 5-oxoproline from various penultimate amino acid residues except L-proline. This Clostridium botulinum (strain Alaska E43 / Type E3) protein is Pyrrolidone-carboxylate peptidase.